Here is a 361-residue protein sequence, read N- to C-terminus: Chorismate synthase (361 aa).

Position 47 (R47) interacts with NADP(+). Residues 124 to 126, G286, 301 to 305, and R327 contribute to the FMN site; these read RAS and KPTAT.

This sequence belongs to the chorismate synthase family. In terms of assembly, homotetramer. It depends on FMNH2 as a cofactor.

The catalysed reaction is 5-O-(1-carboxyvinyl)-3-phosphoshikimate = chorismate + phosphate. Its pathway is metabolic intermediate biosynthesis; chorismate biosynthesis; chorismate from D-erythrose 4-phosphate and phosphoenolpyruvate: step 7/7. In terms of biological role, catalyzes the anti-1,4-elimination of the C-3 phosphate and the C-6 proR hydrogen from 5-enolpyruvylshikimate-3-phosphate (EPSP) to yield chorismate, which is the branch point compound that serves as the starting substrate for the three terminal pathways of aromatic amino acid biosynthesis. This reaction introduces a second double bond into the aromatic ring system. In Akkermansia muciniphila (strain ATCC BAA-835 / DSM 22959 / JCM 33894 / BCRC 81048 / CCUG 64013 / CIP 107961 / Muc), this protein is Chorismate synthase.